A 346-amino-acid chain; its full sequence is Annexin A1 (346 aa).

Position 2 is an N-acetylalanine (Ala2). At Ser5 the chain carries Phosphoserine; by TRPM7. Gln19 participates in a covalent cross-link: Isoglutamyl lysine isopeptide (Gln-Lys) (interchain with K-?). Tyr21 is subject to Phosphotyrosine; by EGFR. The disordered stretch occupies residues 25–47; the sequence is VKGSKGGPGSAVSPYPTFNPSSD. Ser34 and Ser37 each carry phosphoserine. Position 41 is a phosphothreonine (Thr41). Annexin repeat units follow at residues 42-113, 114-185, 197-269, and 273-344; these read FNPS…ALLK, TPAQ…SLAK, DLAD…VVVK, and SKPM…ALCG. Lys58 carries the N6-acetyllysine modification. Ca(2+) is bound by residues Gly59, Val60, Glu62, Lys97, Leu100, Glu105, Met127, Gly129, Gly131, Thr132, and Glu134. Phosphothreonine is present on Thr136. Positions 171, 210, and 213 each coordinate Ca(2+). Lys214 is covalently cross-linked (Glycyl lysine isopeptide (Lys-Gly) (interchain with G-Cter in SUMO1); alternate). Residue Lys214 forms a Glycyl lysine isopeptide (Lys-Gly) (interchain with G-Cter in SUMO2); alternate linkage. Ca(2+) is bound at residue Gly215. The residue at position 239 (Lys239) is an N6-acetyllysine. The Ca(2+) site is built by Asp253, Glu255, and Leu256. Lys257 participates in a covalent cross-link: Glycyl lysine isopeptide (Lys-Gly) (interchain with G-Cter in SUMO1). Glu261, Met286, Gly288, and Gly290 together coordinate Ca(2+). An N6-acetyllysine modification is found at Lys312. A disulfide bond links Cys324 and Cys343. 3 residues coordinate Ca(2+): Leu328, Glu330, and Thr331. A Glycyl lysine isopeptide (Lys-Gly) (interchain with G-Cter in SUMO1) cross-link involves residue Lys332. Ca(2+) is bound at residue Glu336.

Belongs to the annexin family. Homodimer; non-covalently linked. Homodimer; linked by transglutamylation. Homodimers linked by transglutamylation are observed in placenta, but not in other tissues. Interacts with S100A11. Heterotetramer, formed by two molecules each of S100A11 and ANXA1. Interacts with DYSF. Interacts with EGFR. In terms of processing, phosphorylated by EGFR. Phosphorylated by protein kinase C and TRPM7. Phosphorylated in response to EGF treatment. Sumoylated. Post-translationally, proteolytically cleaved by cathepsin CTSG to release the active N-terminal peptide Ac2-26. As to expression, detected in lung and spleen (at protein level).

It is found in the nucleus. The protein resides in the cytoplasm. The protein localises to the cell projection. Its subcellular location is the cilium. It localises to the basolateral cell membrane. It is found in the lateral cell membrane. The protein resides in the early endosome. The protein localises to the cell membrane. Its subcellular location is the cytoplasmic vesicle membrane. It localises to the apical cell membrane. It is found in the membrane. The protein resides in the endosome. The protein localises to the secreted. Its subcellular location is the extracellular space. It localises to the extracellular exosome. It is found in the cytoplasmic vesicle. The protein resides in the secretory vesicle lumen. The protein localises to the phagocytic cup. Its function is as follows. Plays important roles in the innate immune response as effector of glucocorticoid-mediated responses and regulator of the inflammatory process. Has anti-inflammatory activity. Plays a role in glucocorticoid-mediated down-regulation of the early phase of the inflammatory response. Contributes to the adaptive immune response by enhancing signaling cascades that are triggered by T-cell activation, regulates differentiation and proliferation of activated T-cells. Promotes the differentiation of T-cells into Th1 cells and negatively regulates differentiation into Th2 cells. Has no effect on unstimulated T-cells. Negatively regulates hormone exocytosis via activation of the formyl peptide receptors and reorganization of the actin cytoskeleton. Has high affinity for Ca(2+) and can bind up to eight Ca(2+) ions. Displays Ca(2+)-dependent binding to phospholipid membranes. Plays a role in the formation of phagocytic cups and phagosomes. Plays a role in phagocytosis by mediating the Ca(2+)-dependent interaction between phagosomes and the actin cytoskeleton. Functionally, functions at least in part by activating the formyl peptide receptors and downstream signaling cascades. Promotes chemotaxis of granulocytes and monocytes via activation of the formyl peptide receptors. Promotes rearrangement of the actin cytoskeleton, cell polarization and cell migration. Promotes resolution of inflammation and wound healing. Acts via neutrophil N-formyl peptide receptors to enhance the release of CXCL2. The chain is Annexin A1 (ANXA1) from Sus scrofa (Pig).